Reading from the N-terminus, the 300-residue chain is MYAFVTGANGLLGSVVVRTLREQGHAVVGSYHSEEPTFDCPLHQVDITDTERVVELLDEYDVDLVINCAAYTDVDGCESNPEVATAVNGTAPGDLAAVCDDREIPFIHYSTDYVFDGETDGFYEEGDEPAPIQEYGRSKLTGEHAVRDVNPDALILRLSFVYGARGDTSDLVGFPQWVASTLAAGDTVPLFTDQTMTPSRAGNVATTTLELLDAGVSGTFHVASQSAVTPSDFGEKICEVIGGDATLIESSVMADLDRPAARPRRSCLDVSNVEGELGCSQPTLEDDLAALEAAFSDYSS.

NADH contacts are provided by residues 10-12, 46-47, and 70-72; these read GLL, DI, and AYT. NADPH is bound by residues 11-12, 46-47, 70-72, tyrosine 109, tyrosine 135, and lysine 139; these read LL, DI, and AYT. The NADH site is built by tyrosine 135 and lysine 139. Tyrosine 135 (proton donor/acceptor) is an active-site residue.

The protein belongs to the dTDP-4-dehydrorhamnose reductase family.

Its pathway is protein modification; protein glycosylation. The protein operates within cell surface structure biogenesis; S-layer biogenesis. Functionally, reductase involved in N-glycan biosynthetic pathway that takes place under low-salt conditions (1.75 M instead of 3.4 M). Participates in the formation of the tetrasaccharide present at 'Asn-532' of S-layer glycoprotein Csg, consisting of a sulfated hexose, 2 hexoses and rhamnose. Involved in the addition of final rhamnose (sugar 4) of the tetrasaccharide on the dolichol phosphate carrier. The polypeptide is Probable low-salt glycan biosynthesis reductase Agl14 (agl14) (Haloferax volcanii (strain ATCC 29605 / DSM 3757 / JCM 8879 / NBRC 14742 / NCIMB 2012 / VKM B-1768 / DS2) (Halobacterium volcanii)).